Reading from the N-terminus, the 213-residue chain is Uracil phosphoribosyltransferase (213 aa).

5-phospho-alpha-D-ribose 1-diphosphate-binding positions include Arg-77, Arg-102, and 129–137 (DPMLATGGS). Uracil contacts are provided by residues Ile-198 and 203–205 (GDA). Asp-204 contacts 5-phospho-alpha-D-ribose 1-diphosphate.

It belongs to the UPRTase family. Requires Mg(2+) as cofactor.

The enzyme catalyses UMP + diphosphate = 5-phospho-alpha-D-ribose 1-diphosphate + uracil. It functions in the pathway pyrimidine metabolism; UMP biosynthesis via salvage pathway; UMP from uracil: step 1/1. Allosterically activated by GTP. In terms of biological role, catalyzes the conversion of uracil and 5-phospho-alpha-D-ribose 1-diphosphate (PRPP) to UMP and diphosphate. This is Uracil phosphoribosyltransferase from Mycobacteroides abscessus (strain ATCC 19977 / DSM 44196 / CCUG 20993 / CIP 104536 / JCM 13569 / NCTC 13031 / TMC 1543 / L948) (Mycobacterium abscessus).